The following is a 423-amino-acid chain: Serine--tRNA ligase (423 aa).

The interval 107–130 is disordered; the sequence is PHDSVPDGKSENDNREIRQWGAPP. Over residues 110-124 the composition is skewed to basic and acidic residues; it reads SVPDGKSENDNREIR. Residue 231-233 coordinates L-serine; that stretch reads TGE. Position 262–264 (262–264) interacts with ATP; the sequence is RSE. L-serine is bound at residue E285. 349-352 is an ATP binding site; the sequence is EISS. S385 lines the L-serine pocket.

This sequence belongs to the class-II aminoacyl-tRNA synthetase family. Type-1 seryl-tRNA synthetase subfamily. Homodimer. The tRNA molecule binds across the dimer.

It is found in the cytoplasm. The enzyme catalyses tRNA(Ser) + L-serine + ATP = L-seryl-tRNA(Ser) + AMP + diphosphate + H(+). It carries out the reaction tRNA(Sec) + L-serine + ATP = L-seryl-tRNA(Sec) + AMP + diphosphate + H(+). The protein operates within aminoacyl-tRNA biosynthesis; selenocysteinyl-tRNA(Sec) biosynthesis; L-seryl-tRNA(Sec) from L-serine and tRNA(Sec): step 1/1. Catalyzes the attachment of serine to tRNA(Ser). Is also able to aminoacylate tRNA(Sec) with serine, to form the misacylated tRNA L-seryl-tRNA(Sec), which will be further converted into selenocysteinyl-tRNA(Sec). In Coxiella burnetii (strain Dugway 5J108-111), this protein is Serine--tRNA ligase.